Here is a 413-residue protein sequence, read N- to C-terminus: MDTREAVHAAARRARTASRVLALLTTAQKDAALHAAADAVLAASADILAANAADIETARASGTEDSLLDRLRLTPERIEGIASGLRQVAGLPDPVGEVVRGSTLPNGLELRQLRVPLGVVGMVYEARPNVTVDAFGLALKSGNAALLRGSSSAAKSNAALVVALRTSLAAQQLPEDAVQLLPSDDRSSVTHLIQARGLVDVVIPRGGAGLISAVVRDATVPTIETGVGNCHVYVHSAADLEMAERILLNSKTRRPSVCNTAETVLIDAAIAETAVPKLLQALQTHSVTVHGDLPGLVPATESDWSEEYLTLDVALKVVDDLNAAVEHIDRYGTGHTEAIVTSDLAAAREFTARVDAAAVMVNASTAFTDGEQFGFGAEIGISTQKLHARGPMGLPELTSTKWIVWGDGHTRPV.

Belongs to the gamma-glutamyl phosphate reductase family.

The protein localises to the cytoplasm. It catalyses the reaction L-glutamate 5-semialdehyde + phosphate + NADP(+) = L-glutamyl 5-phosphate + NADPH + H(+). Its pathway is amino-acid biosynthesis; L-proline biosynthesis; L-glutamate 5-semialdehyde from L-glutamate: step 2/2. In terms of biological role, catalyzes the NADPH-dependent reduction of L-glutamate 5-phosphate into L-glutamate 5-semialdehyde and phosphate. The product spontaneously undergoes cyclization to form 1-pyrroline-5-carboxylate. This Rhodococcus jostii (strain RHA1) protein is Gamma-glutamyl phosphate reductase.